A 152-amino-acid polypeptide reads, in one-letter code: Deoxyuridine 5'-triphosphate nucleotidohydrolase (152 aa).

Substrate-binding positions include 71–73, N84, 88–90, and M98; these read RSG and LID.

Belongs to the dUTPase family. Requires Mg(2+) as cofactor.

It carries out the reaction dUTP + H2O = dUMP + diphosphate + H(+). It participates in pyrimidine metabolism; dUMP biosynthesis; dUMP from dCTP (dUTP route): step 2/2. Functionally, this enzyme is involved in nucleotide metabolism: it produces dUMP, the immediate precursor of thymidine nucleotides and it decreases the intracellular concentration of dUTP so that uracil cannot be incorporated into DNA. This chain is Deoxyuridine 5'-triphosphate nucleotidohydrolase, found in Shewanella loihica (strain ATCC BAA-1088 / PV-4).